The following is a 460-amino-acid chain: Cysteine--tRNA ligase (460 aa).

A Zn(2+)-binding site is contributed by C28. Residues M30 to H40 carry the 'HIGH' region motif. Zn(2+) is bound by residues C209, H234, and E238. Residues K266–S270 carry the 'KMSKS' region motif. An ATP-binding site is contributed by K269.

This sequence belongs to the class-I aminoacyl-tRNA synthetase family. In terms of assembly, monomer. The cofactor is Zn(2+).

It localises to the cytoplasm. The enzyme catalyses tRNA(Cys) + L-cysteine + ATP = L-cysteinyl-tRNA(Cys) + AMP + diphosphate. In Pseudomonas syringae pv. syringae (strain B728a), this protein is Cysteine--tRNA ligase.